The following is a 184-amino-acid chain: Large ribosomal subunit protein uL22B (184 aa).

Residue lysine 46 forms a Glycyl lysine isopeptide (Lys-Gly) (interchain with G-Cter in ubiquitin) linkage. Residue threonine 70 is modified to Phosphothreonine.

It belongs to the universal ribosomal protein uL22 family. As to quaternary structure, component of the large ribosomal subunit (LSU). Mature yeast ribosomes consist of a small (40S) and a large (60S) subunit. The 40S small subunit contains 1 molecule of ribosomal RNA (18S rRNA) and 33 different proteins (encoded by 57 genes). The large 60S subunit contains 3 rRNA molecules (25S, 5.8S and 5S rRNA) and 46 different proteins (encoded by 81 genes). uL22 is associated with the polypeptide exit tunnel.

It is found in the cytoplasm. Functionally, component of the ribosome, a large ribonucleoprotein complex responsible for the synthesis of proteins in the cell. The small ribosomal subunit (SSU) binds messenger RNAs (mRNAs) and translates the encoded message by selecting cognate aminoacyl-transfer RNA (tRNA) molecules. The large subunit (LSU) contains the ribosomal catalytic site termed the peptidyl transferase center (PTC), which catalyzes the formation of peptide bonds, thereby polymerizing the amino acids delivered by tRNAs into a polypeptide chain. The nascent polypeptides leave the ribosome through a tunnel in the LSU and interact with protein factors that function in enzymatic processing, targeting, and the membrane insertion of nascent chains at the exit of the ribosomal tunnel. The polypeptide is Large ribosomal subunit protein uL22B (Saccharomyces cerevisiae (strain ATCC 204508 / S288c) (Baker's yeast)).